A 633-amino-acid chain; its full sequence is Threonine--tRNA ligase (633 aa).

Residues Met-1 to Thr-61 enclose the TGS domain. A catalytic region spans residues Asp-242–Pro-533. Zn(2+) contacts are provided by Cys-333, His-384, and His-510.

The protein belongs to the class-II aminoacyl-tRNA synthetase family. Homodimer. Zn(2+) serves as cofactor.

The protein resides in the cytoplasm. The enzyme catalyses tRNA(Thr) + L-threonine + ATP = L-threonyl-tRNA(Thr) + AMP + diphosphate + H(+). In terms of biological role, catalyzes the attachment of threonine to tRNA(Thr) in a two-step reaction: L-threonine is first activated by ATP to form Thr-AMP and then transferred to the acceptor end of tRNA(Thr). Also edits incorrectly charged L-seryl-tRNA(Thr). The protein is Threonine--tRNA ligase of Rickettsia bellii (strain OSU 85-389).